The chain runs to 274 residues: Rhamnulose-1-phosphate aldolase (274 aa).

Glu117 is an active-site residue. 3 residues coordinate Zn(2+): His141, His143, and His212.

The protein belongs to the aldolase class II family. RhaD subfamily. Homotetramer. The cofactor is Zn(2+).

The protein localises to the cytoplasm. It carries out the reaction L-rhamnulose 1-phosphate = (S)-lactaldehyde + dihydroxyacetone phosphate. The protein operates within carbohydrate degradation; L-rhamnose degradation; glycerone phosphate from L-rhamnose: step 3/3. Its function is as follows. Catalyzes the reversible cleavage of L-rhamnulose-1-phosphate to dihydroxyacetone phosphate (DHAP) and L-lactaldehyde. The polypeptide is Rhamnulose-1-phosphate aldolase (Escherichia coli O7:K1 (strain IAI39 / ExPEC)).